The sequence spans 171 residues: MMNEDGAYSKKDLEASSRGELFGPKGPRLPASNMLMIDRVITMTKDGGMHGKGYVEAELDVHPNLWFFGCHFIDDPVMPGCLGLDAMWQLVGFYLGWLENEGKGRALGVGEVKFKGQVLPDSKKITYCIDFKKVITGKLIMGIADGKVLSDGQQIYTADDLKVGLFKNTSF.

Residue His-71 is part of the active site.

Belongs to the thioester dehydratase family. FabA subfamily. Homodimer.

Its subcellular location is the cytoplasm. It carries out the reaction a (3R)-hydroxyacyl-[ACP] = a (2E)-enoyl-[ACP] + H2O. The catalysed reaction is (3R)-hydroxydecanoyl-[ACP] = (2E)-decenoyl-[ACP] + H2O. It catalyses the reaction (2E)-decenoyl-[ACP] = (3Z)-decenoyl-[ACP]. It participates in lipid metabolism; fatty acid biosynthesis. Functionally, necessary for the introduction of cis unsaturation into fatty acids. Catalyzes the dehydration of (3R)-3-hydroxydecanoyl-ACP to E-(2)-decenoyl-ACP and then its isomerization to Z-(3)-decenoyl-ACP. Can catalyze the dehydratase reaction for beta-hydroxyacyl-ACPs with saturated chain lengths up to 16:0, being most active on intermediate chain length. In Hamiltonella defensa subsp. Acyrthosiphon pisum (strain 5AT), this protein is 3-hydroxydecanoyl-[acyl-carrier-protein] dehydratase.